Here is a 160-residue protein sequence, read N- to C-terminus: Protein P5 (160 aa).

A helical membrane pass occupies residues Phe-7–Ile-23.

The protein localises to the virion membrane. This chain is Protein P5 (V), found in Pseudoalteromonas espejiana (Bacteriophage PM2).